The following is a 437-amino-acid chain: Ribosomal protein uS12 methylthiotransferase RimO (437 aa).

Residues 3 to 118 (KKFYITTLGC…AGKILREKFP (116 aa)) enclose the MTTase N-terminal domain. Residues C12, C48, C81, C157, C161, and C164 each coordinate [4Fe-4S] cluster. Residues 143-370 (NYSKPYAYVK…RDSHLEILEE (228 aa)) enclose the Radical SAM core domain. Residues 373–437 (ESRIGRTYDA…YEYDMNGTWV (65 aa)) form the TRAM domain.

It belongs to the methylthiotransferase family. RimO subfamily. The cofactor is [4Fe-4S] cluster.

Its subcellular location is the cytoplasm. The enzyme catalyses L-aspartate(89)-[ribosomal protein uS12]-hydrogen + (sulfur carrier)-SH + AH2 + 2 S-adenosyl-L-methionine = 3-methylsulfanyl-L-aspartate(89)-[ribosomal protein uS12]-hydrogen + (sulfur carrier)-H + 5'-deoxyadenosine + L-methionine + A + S-adenosyl-L-homocysteine + 2 H(+). Functionally, catalyzes the methylthiolation of an aspartic acid residue of ribosomal protein uS12. This is Ribosomal protein uS12 methylthiotransferase RimO from Leptospira interrogans serogroup Icterohaemorrhagiae serovar Lai (strain 56601).